Here is a 126-residue protein sequence, read N- to C-terminus: Phosphoribosyl-AMP cyclohydrolase (126 aa).

Position 74 (aspartate 74) interacts with Mg(2+). Cysteine 75 lines the Zn(2+) pocket. Mg(2+)-binding residues include aspartate 76 and aspartate 78. Zn(2+) contacts are provided by cysteine 92 and cysteine 99.

It belongs to the PRA-CH family. In terms of assembly, homodimer. The cofactor is Mg(2+). It depends on Zn(2+) as a cofactor.

The protein localises to the cytoplasm. The catalysed reaction is 1-(5-phospho-beta-D-ribosyl)-5'-AMP + H2O = 1-(5-phospho-beta-D-ribosyl)-5-[(5-phospho-beta-D-ribosylamino)methylideneamino]imidazole-4-carboxamide. Its pathway is amino-acid biosynthesis; L-histidine biosynthesis; L-histidine from 5-phospho-alpha-D-ribose 1-diphosphate: step 3/9. In terms of biological role, catalyzes the hydrolysis of the adenine ring of phosphoribosyl-AMP. This chain is Phosphoribosyl-AMP cyclohydrolase, found in Geotalea daltonii (strain DSM 22248 / JCM 15807 / FRC-32) (Geobacter daltonii).